A 215-amino-acid polypeptide reads, in one-letter code: N-(5'-phosphoribosyl)anthranilate isomerase (215 aa).

The protein belongs to the TrpF family.

The enzyme catalyses N-(5-phospho-beta-D-ribosyl)anthranilate = 1-(2-carboxyphenylamino)-1-deoxy-D-ribulose 5-phosphate. The protein operates within amino-acid biosynthesis; L-tryptophan biosynthesis; L-tryptophan from chorismate: step 3/5. The polypeptide is N-(5'-phosphoribosyl)anthranilate isomerase (Pelodictyon phaeoclathratiforme (strain DSM 5477 / BU-1)).